The sequence spans 856 residues: Leucine--tRNA ligase (856 aa).

The 'HIGH' region motif lies at 42 to 52; it reads PYPSGKLHMGH. Residues 615–619 carry the 'KMSKS' region motif; the sequence is KMSKS. Residue Lys618 coordinates ATP.

It belongs to the class-I aminoacyl-tRNA synthetase family.

The protein resides in the cytoplasm. The catalysed reaction is tRNA(Leu) + L-leucine + ATP = L-leucyl-tRNA(Leu) + AMP + diphosphate. This chain is Leucine--tRNA ligase, found in Chromohalobacter salexigens (strain ATCC BAA-138 / DSM 3043 / CIP 106854 / NCIMB 13768 / 1H11).